Here is a 967-residue protein sequence, read N- to C-terminus: MYSNNRVEVFHGDGRLGELEIYPSRELNQQQDDVMKQRKKKQREVMELAKMGIRISHFSQSGERCPPLAILTTISSCGLCFKLEASPSPAQESLSLFYSSCLRDNKTAVMLLGGEELHLVAMYSENIKNDRPCFWAFSVAPGIYDSCLVMLNLRCLGIVFDLDETLVVANTMRSFEDKIDGFQRRINNEMDPQRLAVIVAEMKRYQDDKNLLKQYIESDQVVENGEVIKVQSEIVPALSDNHQPLVRPLIRLQEKNIILTRINPMIRDTSVLVRMRPSWEELRSYLTAKGRKRFEVYVCTMAERDYALEMWRLLDPEGNLINTNDLLARIVCVKSGFKKSLFNVFLDGTCHPKMALVIDDRLKVWDEKDQPRVHVVPAFAPYYSPQAEAAATPVLCVARNVACGVRGGFFRDFDDSLLPRIAEISYENDAEDIPSPPDVSHYLVSEDDTSGLNGNKDPLSFDGMADTEVERRLKEAISASSAVLPAANIDPRIAAPVQFPMASASSVSVPVPVQVVQQAIQPSAMAFPSIPFQQPQQPTSIAKHLVPSEPSLQSSPAREEGEVPESELDPDTRRRLLILQHGQDTRDPAPSEPSFPQRPPVQAPPSHVQSRNGWFPVEEEMDPAQIRRAVSKEYPLDSEMIHMEKHRPRHPSFFSKIDNSTQSDRMLHENRRPPKESLRRDEQLRSNNNLPDSHPFYGEDASWNQSSSRNSDLDFLPERSVSATETSADVLHGIAIKCGAKVEYKPSLVSSTDLRFSVEAWLSNQKIGEGIGKSRREALHKAAEASIQNLADGYMRANGDPGPSHRDATPFTNENISMGNANALNNQPFARDETALPVSSRPTDPRLEGSMRHTGSITALRELCASEGLEMAFQSQRQLPSDMVHRDELHAQVEIDGRVVGEGVGSTWDEARMQAAERALSSVRSMLGQPLHKRQGSPRSFGGMSNKRLKPDFQRSLQRMPSSGRYS.

The Nuclear localization signal (NLS) signature appears at 38–41 (RKKK). The FCP1 homology domain maps to 151 to 401 (LNLRCLGIVF…TPVLCVARNV (251 aa)). 2 disordered regions span residues 548 to 611 (SEPS…VQSR) and 643 to 712 (MEKH…RNSD). The span at 590–603 (PSEPSFPQRPPVQA) shows a compositional bias: pro residues. Basic and acidic residues predominate over residues 665–684 (RMLHENRRPPKESLRRDEQL). 2 DRBM domains span residues 724-792 (TETS…NLAD) and 855-925 (GSIT…SVRS). Residues 928 to 967 (GQPLHKRQGSPRSFGGMSNKRLKPDFQRSLQRMPSSGRYS) form a disordered region. Positions 945 to 967 (SNKRLKPDFQRSLQRMPSSGRYS) are required for nuclear localization (NLS). The Nuclear localization signal (NLS) motif lies at 947–951 (KRLKP). Residues 955-967 (RSLQRMPSSGRYS) show a composition bias toward polar residues.

In terms of assembly, interacts with FREE1, ANAC019, MYB3, MYB4 and MYB32. Binds to DMS3. Interacts with RCF3. Interacts with RS40 and RS41. Interacts with EIF4A3. Interacts with UPF3. Mg(2+) is required as a cofactor. It depends on Co(2+) as a cofactor. Requires Mn(2+) as cofactor. As to expression, expressed at very low levels in roots, leaves, stems, flowers and siliques.

The protein localises to the nucleus. The protein resides in the nucleus speckle. It carries out the reaction O-phospho-L-seryl-[protein] + H2O = L-seryl-[protein] + phosphate. The enzyme catalyses O-phospho-L-threonyl-[protein] + H2O = L-threonyl-[protein] + phosphate. Functionally, processively dephosphorylates 'Ser-5' but not 'Ser-2' of the heptad repeats YSPTSPS in the C-terminal domain of the largest RNA polymerase II subunit (RPB1). This promotes the activity of RNA polymerase II. Together with CPL2, required for male gametes fertility. Multifunctional regulator that modulates plant growth, stress, and phytohormones responses. Negative regulator of stress gene transcription involved in abscisic acid (ABA) mediated and jasmonic acid (JA) mediated signaling pathways, NaCl, osmotic stress, wounding, and cold resistance. Negatively regulates the expression of jasmonic acid (JA) biosynthetic genes in response to wounding. Forms a complex with RCF3 that modulates co-transcriptional processes such as mRNA capping and polyadenylation, and functions to repress stress-inducible gene expression. Dephosphorylates RCF3. Involved in the dephosphorylation of EIF4A3. This dephosphorylation retains EIF4A3 in the nucleus and limits its accumulation in the cytoplasm. Is essential for the degradation of the nonsense-mediated mRNA decay (NMD) transcripts. This is RNA polymerase II C-terminal domain phosphatase-like 1 from Arabidopsis thaliana (Mouse-ear cress).